A 361-amino-acid chain; its full sequence is Putative dual-specificity RNA methyltransferase RlmN (361 aa).

The Proton acceptor role is filled by Glu-91. The Radical SAM core domain occupies 97–329 (QHYGLSVCVT…KKKGVNCVVR (233 aa)). 3 residues coordinate [4Fe-4S] cluster: Cys-111, Cys-115, and Cys-118. S-adenosyl-L-methionine contacts are provided by residues 163 to 164 (GE), Ser-195, 218 to 220 (SLH), and Thr-296.

The protein belongs to the radical SAM superfamily. RlmN family. [4Fe-4S] cluster serves as cofactor.

It is found in the cytoplasm. It catalyses the reaction adenosine(2503) in 23S rRNA + 2 reduced [2Fe-2S]-[ferredoxin] + 2 S-adenosyl-L-methionine = 2-methyladenosine(2503) in 23S rRNA + 5'-deoxyadenosine + L-methionine + 2 oxidized [2Fe-2S]-[ferredoxin] + S-adenosyl-L-homocysteine. The catalysed reaction is adenosine(37) in tRNA + 2 reduced [2Fe-2S]-[ferredoxin] + 2 S-adenosyl-L-methionine = 2-methyladenosine(37) in tRNA + 5'-deoxyadenosine + L-methionine + 2 oxidized [2Fe-2S]-[ferredoxin] + S-adenosyl-L-homocysteine. In terms of biological role, specifically methylates position 2 of adenine 2503 in 23S rRNA and position 2 of adenine 37 in tRNAs. The polypeptide is Putative dual-specificity RNA methyltransferase RlmN (Streptococcus pneumoniae (strain CGSP14)).